Reading from the N-terminus, the 142-residue chain is Large ribosomal subunit protein uL13 (142 aa).

Belongs to the universal ribosomal protein uL13 family. In terms of assembly, part of the 50S ribosomal subunit.

This protein is one of the early assembly proteins of the 50S ribosomal subunit, although it is not seen to bind rRNA by itself. It is important during the early stages of 50S assembly. The chain is Large ribosomal subunit protein uL13 from Caldicellulosiruptor saccharolyticus (strain ATCC 43494 / DSM 8903 / Tp8T 6331).